A 407-amino-acid polypeptide reads, in one-letter code: Phosphopentomutase (407 aa).

Asp10, Asp306, His311, Asp347, His348, and His359 together coordinate Mn(2+).

It belongs to the phosphopentomutase family. Mn(2+) serves as cofactor.

Its subcellular location is the cytoplasm. It catalyses the reaction 2-deoxy-alpha-D-ribose 1-phosphate = 2-deoxy-D-ribose 5-phosphate. It carries out the reaction alpha-D-ribose 1-phosphate = D-ribose 5-phosphate. It functions in the pathway carbohydrate degradation; 2-deoxy-D-ribose 1-phosphate degradation; D-glyceraldehyde 3-phosphate and acetaldehyde from 2-deoxy-alpha-D-ribose 1-phosphate: step 1/2. Its function is as follows. Isomerase that catalyzes the conversion of deoxy-ribose 1-phosphate (dRib-1-P) and ribose 1-phosphate (Rib-1-P) to deoxy-ribose 5-phosphate (dRib-5-P) and ribose 5-phosphate (Rib-5-P), respectively. This is Phosphopentomutase from Pectobacterium carotovorum subsp. carotovorum (strain PC1).